The sequence spans 217 residues: UPF0111 protein MTH_1689 (217 aa).

The protein belongs to the UPF0111 family.

The protein is UPF0111 protein MTH_1689 of Methanothermobacter thermautotrophicus (strain ATCC 29096 / DSM 1053 / JCM 10044 / NBRC 100330 / Delta H) (Methanobacterium thermoautotrophicum).